We begin with the raw amino-acid sequence, 951 residues long: Protocadherin-20 (951 aa).

The first 60 residues, 1-60 (MRGRGNARSSQALGVSWCPATWHPRLDMGRLHRPRSSTSYRNLPHLFLFFLFVGPFSCLG), serve as a signal peptide directing secretion. At 61-890 (SYSRATELLY…VESVSCMPTL (830 aa)) the chain is on the extracellular side. 6 consecutive Cadherin domains span residues 64–209 (RATE…APQF), 210–320 (PVSQ…CPLF), 321–535 (TDSQ…APIF), 536–639 (LQPL…SPRF), 640–742 (INKD…PPLV), and 746–863 (QSNM…EPEI). Residue asparagine 135 is glycosylated (N-linked (GlcNAc...) asparagine). N-linked (GlcNAc...) asparagine glycosylation is found at asparagine 326 and asparagine 332. Residues asparagine 680, asparagine 748, asparagine 803, asparagine 844, and asparagine 849 are each glycosylated (N-linked (GlcNAc...) asparagine). The chain crosses the membrane as a helical span at residues 891 to 911 (VALSVISLGSITLVTGMGIYI). Topologically, residues 912-951 (CLRKGEKHPREDENLEVQIPLKGKIDLHMRERKPMDISNI) are cytoplasmic.

It localises to the cell membrane. Functionally, potential calcium-dependent cell-adhesion protein. The protein is Protocadherin-20 (PCDH20) of Homo sapiens (Human).